The following is a 307-amino-acid chain: Glutaminase 1 (307 aa).

Residues Ser-62, Asn-114, Glu-159, Asn-166, Tyr-190, Tyr-242, and Val-260 each contribute to the substrate site.

The protein belongs to the glutaminase family. Homotetramer.

It catalyses the reaction L-glutamine + H2O = L-glutamate + NH4(+). The sequence is that of Glutaminase 1 from Clostridium perfringens (strain 13 / Type A).